Consider the following 765-residue polypeptide: LPS-assembly protein LptD (765 aa).

The first 18 residues, 1 to 18 (MQIRYFLALSLLPQLVLA), serve as a signal peptide directing secretion.

The protein belongs to the LptD family. In terms of assembly, component of the lipopolysaccharide transport and assembly complex. Interacts with LptE and LptA.

It is found in the cell outer membrane. Functionally, together with LptE, is involved in the assembly of lipopolysaccharide (LPS) at the surface of the outer membrane. The sequence is that of LPS-assembly protein LptD from Shewanella sp. (strain MR-4).